Reading from the N-terminus, the 498-residue chain is MEKYIMSLDQGTTSSRCIIFNKKGEVVSVAQKEFTQIYPKAGWVEHDPLEIWGKQAGVAGEALNIARISPEQIAGIGITNQRETTVVWNKRTGMPVYNAIVWQCRRTAGYCDELREKGLDKTIKEKTGLMLDAYFSATKIKWILDNVEGARELAEKGDLLFGNIDTWLIWNMTKGKIHVTDYTNASRTMLFNIHELKWDEELLEILDIPKSMLPEVKPSSCVYGETDEILFGVSIPISGDAGDQQAALFGQTCFNAGMAKNTYGTGCFLLMNTGEKAVDSKNGLLTTIAVGIDGKVEYALEGSIFIGGAVIQWLRDELRMVKTAQETEKYATEVEDNNGVYLVPAFVGIGAPYWDSYARGTILGLTRGAKKEHIIRAALESMAYQTHDVLKAMEEDSGIELKALKVDGGACQNNFLMQFQSDILGVEVDRPEVVETTALGAAYLAGLAVGYWKDRNEISQNWAISRSFAPAMEDEKKEKLIKGWHKAVTKAMDWEEKE.

Residue Thr-12 coordinates ADP. ATP is bound by residues Thr-12, Thr-13, and Ser-14. A sn-glycerol 3-phosphate-binding site is contributed by Thr-12. Residue Arg-16 participates in ADP binding. Sn-glycerol 3-phosphate is bound by residues Arg-82, Glu-83, Tyr-134, and Asp-243. Glycerol is bound by residues Arg-82, Glu-83, Tyr-134, Asp-243, and Gln-244. 2 residues coordinate ADP: Thr-265 and Gly-308. ATP-binding residues include Thr-265, Gly-308, Gln-312, and Gly-409. ADP is bound by residues Gly-409 and Asn-413.

This sequence belongs to the FGGY kinase family. As to quaternary structure, homotetramer and homodimer (in equilibrium).

It carries out the reaction glycerol + ATP = sn-glycerol 3-phosphate + ADP + H(+). The protein operates within polyol metabolism; glycerol degradation via glycerol kinase pathway; sn-glycerol 3-phosphate from glycerol: step 1/1. Its activity is regulated as follows. Activated by phosphorylation and inhibited by fructose 1,6-bisphosphate (FBP). Functionally, key enzyme in the regulation of glycerol uptake and metabolism. Catalyzes the phosphorylation of glycerol to yield sn-glycerol 3-phosphate. The polypeptide is Glycerol kinase (Clostridium botulinum (strain Langeland / NCTC 10281 / Type F)).